Reading from the N-terminus, the 465-residue chain is Innexin-11 (465 aa).

The next 4 membrane-spanning stretches (helical) occupy residues 29–49 (LMTP…QFGG), 105–125 (QWVP…SYLW), 195–215 (SGFI…NVFA), and 286–306 (IFVL…VSLV). Residues 433-465 (ISTSLMPDKDDIESSSTSSEEDQKRVSNVITNI) are disordered.

This sequence belongs to the pannexin family.

The protein resides in the cell membrane. Its subcellular location is the cell junction. It is found in the gap junction. Functionally, structural component of the gap junctions. In Caenorhabditis elegans, this protein is Innexin-11 (inx-11).